Reading from the N-terminus, the 334-residue chain is Ketol-acid reductoisomerase (NADP(+)) (334 aa).

The 181-residue stretch at 1 to 181 (MTTVYYDQDV…GATRAGVIET (181 aa)) folds into the KARI N-terminal Rossmann domain. Residues 25-28 (YGSQ), arginine 48, serine 52, and 82-85 (DEIQ) contribute to the NADP(+) site. Residue histidine 107 is part of the active site. Glycine 133 provides a ligand contact to NADP(+). Positions 182 to 327 (TFKEETETDL…RELREMMPFI (146 aa)) constitute a KARI C-terminal knotted domain. 4 residues coordinate Mg(2+): aspartate 190, glutamate 194, glutamate 226, and glutamate 230. Serine 251 provides a ligand contact to substrate.

This sequence belongs to the ketol-acid reductoisomerase family. Mg(2+) is required as a cofactor.

The enzyme catalyses (2R)-2,3-dihydroxy-3-methylbutanoate + NADP(+) = (2S)-2-acetolactate + NADPH + H(+). The catalysed reaction is (2R,3R)-2,3-dihydroxy-3-methylpentanoate + NADP(+) = (S)-2-ethyl-2-hydroxy-3-oxobutanoate + NADPH + H(+). The protein operates within amino-acid biosynthesis; L-isoleucine biosynthesis; L-isoleucine from 2-oxobutanoate: step 2/4. It participates in amino-acid biosynthesis; L-valine biosynthesis; L-valine from pyruvate: step 2/4. Involved in the biosynthesis of branched-chain amino acids (BCAA). Catalyzes an alkyl-migration followed by a ketol-acid reduction of (S)-2-acetolactate (S2AL) to yield (R)-2,3-dihydroxy-isovalerate. In the isomerase reaction, S2AL is rearranged via a Mg-dependent methyl migration to produce 3-hydroxy-3-methyl-2-ketobutyrate (HMKB). In the reductase reaction, this 2-ketoacid undergoes a metal-dependent reduction by NADPH to yield (R)-2,3-dihydroxy-isovalerate. In Staphylococcus aureus (strain Mu3 / ATCC 700698), this protein is Ketol-acid reductoisomerase (NADP(+)).